The chain runs to 203 residues: MPGTLYVVSAPSGAGKTSLVNALVRQDEAVSLSVSHTTRPPRPGEEDGVNYHFVDRDRFQALVAQGDFLEHAEVFGNHYGTSRSAVQALLDQGQDVILEIDWQGARQVRERMPGCLSVFILPPSREELRRRLTQRGQDEPEVIDRRMAEAVSEMSHYAEYDYLLVNDDFDRTLADLQAIFTANRHRLERQEPLLAETLRDLLG.

The Guanylate kinase-like domain maps to 3 to 181; it reads GTLYVVSAPS…TLADLQAIFT (179 aa). 10-17 provides a ligand contact to ATP; it reads APSGAGKT.

The protein belongs to the guanylate kinase family.

Its subcellular location is the cytoplasm. It carries out the reaction GMP + ATP = GDP + ADP. Essential for recycling GMP and indirectly, cGMP. The sequence is that of Guanylate kinase from Alkalilimnicola ehrlichii (strain ATCC BAA-1101 / DSM 17681 / MLHE-1).